The primary structure comprises 434 residues: Asparagine--tRNA ligase (434 aa).

It belongs to the class-II aminoacyl-tRNA synthetase family.

It is found in the cytoplasm. The enzyme catalyses tRNA(Asn) + L-asparagine + ATP = L-asparaginyl-tRNA(Asn) + AMP + diphosphate + H(+). The sequence is that of Asparagine--tRNA ligase from Pyrococcus abyssi (strain GE5 / Orsay).